Here is a 157-residue protein sequence, read N- to C-terminus: Protein Smg (157 aa).

It belongs to the Smg family.

The polypeptide is Protein Smg (Pectobacterium carotovorum subsp. carotovorum (strain PC1)).